Consider the following 350-residue polypeptide: Twinfilin-1 (350 aa).

An N-acetylserine modification is found at Ser-2. The 138-residue stretch at 2–139 (SHQTGIQASE…SLHGYRKYLL (138 aa)) folds into the ADF-H 1 domain. 2 positions are modified to phosphoserine: Ser-143 and Ser-277. One can recognise an ADF-H 2 domain in the interval 175-313 (LQGVAFPISR…TADFLYDEVH (139 aa)). Tyr-309 carries the post-translational modification Phosphotyrosine. Residues 316–350 (QHAHKQSFAKPKGPAGKRGIRRLIRGPAEAEATTD) are disordered. Thr-349 bears the Phosphothreonine mark.

It belongs to the actin-binding proteins ADF family. Twinfilin subfamily. In terms of assembly, interacts with G-actin; ADP-actin form and capping protein (CP). May also be able to interact with TWF2 and phosphoinositides, PI(4,5)P2. When bound to PI(4,5)P2, it is down-regulated. Interacts with ACTG1. Phosphorylated on serine and threonine residues.

The protein localises to the cytoplasm. The protein resides in the cytoskeleton. Functionally, actin-binding protein involved in motile and morphological processes. Inhibits actin polymerization, likely by sequestering G-actin. By capping the barbed ends of filaments, it also regulates motility. Seems to play an important role in clathrin-mediated endocytosis and distribution of endocytic organelles. The protein is Twinfilin-1 (Twf1) of Rattus norvegicus (Rat).